We begin with the raw amino-acid sequence, 654 residues long: Fructose-1,6-bisphosphatase class 3 (654 aa).

Belongs to the FBPase class 3 family. Mn(2+) is required as a cofactor.

It catalyses the reaction beta-D-fructose 1,6-bisphosphate + H2O = beta-D-fructose 6-phosphate + phosphate. It functions in the pathway carbohydrate biosynthesis; gluconeogenesis. The chain is Fructose-1,6-bisphosphatase class 3 from Staphylococcus haemolyticus (strain JCSC1435).